The chain runs to 171 residues: Auxin-responsive protein IAA33 (171 aa).

2 stretches are compositionally biased toward polar residues: residues 1–11 and 19–32; these read MNSFEPQSQDS and DNSTTQQPRDTTTP. Residues 1–51 are disordered; that stretch reads MNSFEPQSQDSLQRRFHQDNSTTQQPRDTTTPFIPKPASKNHNNSNSSSGA. The span at 40–49 shows a compositional bias: low complexity; it reads KNHNNSNSSS. Positions 72–162 constitute a PB1 domain; that stretch reads VPPVTVVLEG…KRIRILPVKG (91 aa).

It belongs to the Aux/IAA family. As to quaternary structure, homodimers and heterodimers.

Its subcellular location is the nucleus. Functionally, aux/IAA proteins are short-lived transcriptional factors that function as repressors of early auxin response genes at low auxin concentrations. Repression is thought to result from the interaction with auxin response factors (ARFs), proteins that bind to the auxin-responsive promoter element (AuxRE). Formation of heterodimers with ARF proteins may alter their ability to modulate early auxin response genes expression. This Arabidopsis thaliana (Mouse-ear cress) protein is Auxin-responsive protein IAA33 (IAA33).